A 204-amino-acid chain; its full sequence is MEKSNDHDKASHGGSGGGATEKWEETSPGIRTAETMLRLAPVGLCVAALVVMLKDSETNEFGSISYSNLTAFRYLVHANGICAGYSLLSAAIAAMPRSSSTMPRVWTFFCLDQLLTYLVLAAGAVSAEVLYLAYNGDSAITWSDACSSYGGFCHRATASVIITFFVVCFYILLSLISSYKLFTRFDPPSIVDSDKTLEVAVFGS.

The span at 1–11 (MEKSNDHDKAS) shows a compositional bias: basic and acidic residues. Residues 1–25 (MEKSNDHDKASHGGSGGGATEKWEE) are disordered. Residues 1–32 (MEKSNDHDKASHGGSGGGATEKWEETSPGIRT) lie on the Cytoplasmic side of the membrane. The helical transmembrane segment at 33–53 (AETMLRLAPVGLCVAALVVML) threads the bilayer. At 54–74 (KDSETNEFGSISYSNLTAFRY) the chain is on the extracellular side. Residue asparagine 68 is glycosylated (N-linked (GlcNAc...) asparagine). Residues 75-95 (LVHANGICAGYSLLSAAIAAM) traverse the membrane as a helical segment. Residues 96 to 113 (PRSSSTMPRVWTFFCLDQ) lie on the Cytoplasmic side of the membrane. A helical membrane pass occupies residues 114–134 (LLTYLVLAAGAVSAEVLYLAY). Residues 135-155 (NGDSAITWSDACSSYGGFCHR) are Extracellular-facing. Residues 156–176 (ATASVIITFFVVCFYILLSLI) form a helical membrane-spanning segment. Topologically, residues 177–204 (SSYKLFTRFDPPSIVDSDKTLEVAVFGS) are cytoplasmic.

The protein belongs to the Casparian strip membrane proteins (CASP) family. Homodimer and heterodimers.

The protein resides in the cell membrane. The protein is CASP-like protein 2A1 of Arabidopsis lyrata subsp. lyrata (Lyre-leaved rock-cress).